The chain runs to 200 residues: Prolactin (200 aa).

3 cysteine pairs are disulfide-bonded: Cys4-Cys11, Cys59-Cys175, and Cys192-Cys200.

The protein belongs to the somatotropin/prolactin family. As to expression, pituitary gland.

It is found in the secreted. In Protopterus aethiopicus (Marbled lungfish), this protein is Prolactin (prl).